Here is a 360-residue protein sequence, read N- to C-terminus: Peptide chain release factor 1 (360 aa).

Position 235 is an N5-methylglutamine (glutamine 235). The segment covering 285–295 has biased composition (basic and acidic residues); that stretch reads RQAAEQADTRR. The tract at residues 285–309 is disordered; the sequence is RQAAEQADTRRNLLGSGDRSDKIRT.

This sequence belongs to the prokaryotic/mitochondrial release factor family. Methylated by PrmC. Methylation increases the termination efficiency of RF1.

The protein resides in the cytoplasm. In terms of biological role, peptide chain release factor 1 directs the termination of translation in response to the peptide chain termination codons UAG and UAA. The polypeptide is Peptide chain release factor 1 (Actinobacillus pleuropneumoniae serotype 7 (strain AP76)).